We begin with the raw amino-acid sequence, 372 residues long: NAD(P)H-quinone oxidoreductase subunit 1 (372 aa).

8 helical membrane-spanning segments follow: residues 27–47 (AIWMPLPMFLMIIAATVGVLV), 97–117 (WLFLFGPILVVMPVFVSYLIV), 130–150 (VGIFLWISLSSIAPIGLLMAG), 176–196 (LALSVLAIVMMSNSLSTIDIV), 204–224 (ILGWNIWRQPVGFLIFWIAAL), 254–274 (FALFYVGSYVNLVLSALVFAV), 308–328 (SLGITMTVLKAYFLIFIAILL), and 351–371 (VSLVNLLLTAALKLAFPFAFG).

It belongs to the complex I subunit 1 family. NDH-1 is composed of at least 11 different subunits.

Its subcellular location is the cellular thylakoid membrane. It carries out the reaction a plastoquinone + NADH + (n+1) H(+)(in) = a plastoquinol + NAD(+) + n H(+)(out). The catalysed reaction is a plastoquinone + NADPH + (n+1) H(+)(in) = a plastoquinol + NADP(+) + n H(+)(out). Functionally, NDH-1 shuttles electrons from an unknown electron donor, via FMN and iron-sulfur (Fe-S) centers, to quinones in the respiratory and/or the photosynthetic chain. The immediate electron acceptor for the enzyme in this species is believed to be plastoquinone. Couples the redox reaction to proton translocation, and thus conserves the redox energy in a proton gradient. This is NAD(P)H-quinone oxidoreductase subunit 1 from Microcystis aeruginosa (strain NIES-843 / IAM M-2473).